The chain runs to 157 residues: Protein Smg homolog (157 aa).

Belongs to the Smg family.

The polypeptide is Protein Smg homolog (Pseudoalteromonas translucida (strain TAC 125)).